We begin with the raw amino-acid sequence, 197 residues long: Holliday junction branch migration complex subunit RuvA (197 aa).

Positions 1-64 are domain I; that stretch reads MIGRLRGIVA…EDSVSLYGFL (64 aa). Residues 65–143 form a domain II region; sequence REGERRLFRD…QFGAGGALPT (79 aa). Residues 144 to 153 form a flexible linker region; it reads GSGPAPADPL. The segment at 153–197 is domain III; the sequence is LSDATVALQQLGYKPAEAARMAREAFNEGDEVAIVIRKALQSALR.

Belongs to the RuvA family. As to quaternary structure, homotetramer. Forms an RuvA(8)-RuvB(12)-Holliday junction (HJ) complex. HJ DNA is sandwiched between 2 RuvA tetramers; dsDNA enters through RuvA and exits via RuvB. An RuvB hexamer assembles on each DNA strand where it exits the tetramer. Each RuvB hexamer is contacted by two RuvA subunits (via domain III) on 2 adjacent RuvB subunits; this complex drives branch migration. In the full resolvosome a probable DNA-RuvA(4)-RuvB(12)-RuvC(2) complex forms which resolves the HJ.

It is found in the cytoplasm. The RuvA-RuvB-RuvC complex processes Holliday junction (HJ) DNA during genetic recombination and DNA repair, while the RuvA-RuvB complex plays an important role in the rescue of blocked DNA replication forks via replication fork reversal (RFR). RuvA specifically binds to HJ cruciform DNA, conferring on it an open structure. The RuvB hexamer acts as an ATP-dependent pump, pulling dsDNA into and through the RuvAB complex. HJ branch migration allows RuvC to scan DNA until it finds its consensus sequence, where it cleaves and resolves the cruciform DNA. In Stenotrophomonas maltophilia (strain R551-3), this protein is Holliday junction branch migration complex subunit RuvA.